The chain runs to 332 residues: 2-oxoglutarate-dependent dioxygenase ecdK (332 aa).

In terms of domain architecture, Fe2OG dioxygenase spans 178–294 (HASELRLNHY…RRSVAFFLKP (117 aa)). Fe cation-binding residues include histidine 206, aspartate 208, and histidine 266. A 2-oxoglutarate-binding site is contributed by arginine 285.

Belongs to the iron/ascorbate-dependent oxidoreductase family. Requires Fe(2+) as cofactor.

Its pathway is antifungal biosynthesis. Functionally, 2-oxoglutarate-dependent dioxygenase; part of the gene cluster that mediates the biosynthesis of echinocandin B, a fungal lipidated cyclic hexapeptide that acts as an antifungal agent. Linoleoyl-AMP, produced by the fatty-acyl-AMP ligase ecdI, is transferred to the initiation carrier domain (T0) of ecdA. The linoleoyl-S-phosphopantetheinyl-T0 is sequentially extended with L-ornithine, L-threonine, L-proline, L-homotyrosine, L-threonine, and 4R-methyl-L-proline to form the linear hexapeptide. Thereafter, the terminal condensation (C7) performs macrocyclization of the NRPS product and the cyclic scaffold is released from ecdA. All six of the amino acid residues are hydroxylated, including 4R,5R-dihydroxy-L-ornithine, 4R-hydroxyl-L-proline, 3S,4S-dihydroxy-L-homotyrosine, and 3S-hydroxyl-4S-methyl-L-prolin. In the pathway, all the hydroxylation reactions are proposed to occur following completion of the cyclic peptide, so the unhydroxylated precursor produced by ecdA will undergo six rounds of hydroxylation. Five hydroxylase genes (ecdG, ecdH, ecdK, htyE and htyF) are embedded within the echinocandin B (ecd) and L-homotyrosine (hty) clusters. The polypeptide is 2-oxoglutarate-dependent dioxygenase ecdK (Aspergillus rugulosus (Emericella rugulosa)).